The sequence spans 239 residues: Exosome complex component Rrp4 (239 aa).

One can recognise an S1 motif domain in the interval 67-139 (GDFVVGIVEE…PVQRVELSLL (73 aa)). One can recognise a KH domain in the interval 151-217 (QGGQVVEIDP…LAVRAIREIE (67 aa)).

This sequence belongs to the RRP4 family. Component of the archaeal exosome complex. Forms a trimer of Rrp4 and/or Csl4 subunits. The trimer associates with a hexameric ring-like arrangement composed of 3 Rrp41-Rrp42 heterodimers.

Its subcellular location is the cytoplasm. In terms of biological role, non-catalytic component of the exosome, which is a complex involved in RNA degradation. Increases the RNA binding and the efficiency of RNA degradation. Confers strong poly(A) specificity to the exosome. The chain is Exosome complex component Rrp4 from Methanopyrus kandleri (strain AV19 / DSM 6324 / JCM 9639 / NBRC 100938).